A 615-amino-acid polypeptide reads, in one-letter code: UvrABC system protein C (615 aa).

The GIY-YIG domain maps to 14 to 91 (TSPGCYIHKD…IKENKPKYNI (78 aa)). Positions 196-231 (NKIIDELKGKMAAAAQTMEFERAAEYRDLIQAIGTL) constitute a UVR domain.

The protein belongs to the UvrC family. Interacts with UvrB in an incision complex.

Its subcellular location is the cytoplasm. The UvrABC repair system catalyzes the recognition and processing of DNA lesions. UvrC both incises the 5' and 3' sides of the lesion. The N-terminal half is responsible for the 3' incision and the C-terminal half is responsible for the 5' incision. This Streptococcus pneumoniae serotype 19F (strain G54) protein is UvrABC system protein C.